We begin with the raw amino-acid sequence, 185 residues long: Elongation factor P (185 aa).

It belongs to the elongation factor P family.

The protein localises to the cytoplasm. It functions in the pathway protein biosynthesis; polypeptide chain elongation. Its function is as follows. Involved in peptide bond synthesis. Stimulates efficient translation and peptide-bond synthesis on native or reconstituted 70S ribosomes in vitro. Probably functions indirectly by altering the affinity of the ribosome for aminoacyl-tRNA, thus increasing their reactivity as acceptors for peptidyl transferase. The sequence is that of Elongation factor P from Streptococcus pyogenes serotype M5 (strain Manfredo).